The following is a 579-amino-acid chain: Effector protein HopAB3 (579 aa).

3 disordered regions span residues Met1–Val140, Val214–Pro294, and Pro384–Ala408. The interval Met1 to Leu336 is host recognition; Pto interaction. Low complexity-rich tracts occupy residues Ala23–Ser39, Arg89–Ala101, Ala219–Ser248, Asn266–Arg281, and Pro384–Ser402. The segment at His337–Pro579 is E3 ubiquitin-protein ligase.

Belongs to the HopAB family. As to quaternary structure, interacts physically with plant cell Pto. Post-translationally, auto-ubiquitinated.

The protein resides in the secreted. Its function is as follows. Effector protein involved in gene-for-gene resistance in tomato plants. It is recognized by the host Pto resistance protein and elicits Pto and Prf-dependent hypersensitive response (HR) and programmed cell death (PCD), resulting in host immunity. In susceptible plants, acts as a virulence factor by suppressing PCD and HR-based plant immunity. This function requires its E3 ubiquitin ligase activity probably by recruiting E2 enzymes and transferring ubiquitin molecules to cellular proteins involved in regulation of PCD and targeting them for degradation. Enhances the development of disease symptoms and bacterial growth. The sequence is that of Effector protein HopAB3 (hopAB3) from Pseudomonas syringae pv. tomato.